We begin with the raw amino-acid sequence, 104 residues long: Large ribosomal subunit protein uL24 (104 aa).

It belongs to the universal ribosomal protein uL24 family. In terms of assembly, part of the 50S ribosomal subunit.

Its function is as follows. One of two assembly initiator proteins, it binds directly to the 5'-end of the 23S rRNA, where it nucleates assembly of the 50S subunit. Functionally, one of the proteins that surrounds the polypeptide exit tunnel on the outside of the subunit. This is Large ribosomal subunit protein uL24 from Baumannia cicadellinicola subsp. Homalodisca coagulata.